The primary structure comprises 450 residues: 3-phosphoshikimate 1-carboxyvinyltransferase (450 aa).

Positions 28, 29, and 33 each coordinate 3-phosphoshikimate. Lys28 serves as a coordination point for phosphoenolpyruvate. The phosphoenolpyruvate site is built by Gly100 and Arg128. 4 residues coordinate 3-phosphoshikimate: Ser173, Gln175, Asp326, and Lys353. Residue Gln175 participates in phosphoenolpyruvate binding. Asp326 serves as the catalytic Proton acceptor. Phosphoenolpyruvate-binding residues include Arg357 and Arg402.

It belongs to the EPSP synthase family. Monomer.

It is found in the cytoplasm. It carries out the reaction 3-phosphoshikimate + phosphoenolpyruvate = 5-O-(1-carboxyvinyl)-3-phosphoshikimate + phosphate. Its pathway is metabolic intermediate biosynthesis; chorismate biosynthesis; chorismate from D-erythrose 4-phosphate and phosphoenolpyruvate: step 6/7. In terms of biological role, catalyzes the transfer of the enolpyruvyl moiety of phosphoenolpyruvate (PEP) to the 5-hydroxyl of shikimate-3-phosphate (S3P) to produce enolpyruvyl shikimate-3-phosphate and inorganic phosphate. This is 3-phosphoshikimate 1-carboxyvinyltransferase from Brucella canis (strain ATCC 23365 / NCTC 10854 / RM-666).